The following is a 61-amino-acid chain: Temporin-SN2 (61 aa).

The signal sequence occupies residues 1 to 22; that stretch reads MFTLKKTLLLLFFLGTINLSLC. The propeptide at 23-44 is removed in mature form; that stretch reads EEERNAEEERRDGDDEMDVEVK. The residue at position 61 (Lys61) is a Lysine amide.

Belongs to the frog skin active peptide (FSAP) family. Temporin subfamily. In terms of tissue distribution, expressed by the skin glands.

It localises to the secreted. Functionally, antimicrobial peptide. Active against some Gram-positive and Gram-negative bacterial strains. Active against fungus C.glabrata 090902 but not against C.albicans ATCC 12231. Shows very weak hemolytic activity against human erythrocytes. The polypeptide is Temporin-SN2 (Sylvirana spinulosa (Fine-spined frog)).